A 451-amino-acid chain; its full sequence is ATP-dependent protease ATPase subunit HslU (451 aa).

Residues Ile-26, 68–73 (GVGKTE), Asp-263, Glu-328, and Arg-400 each bind ATP.

Belongs to the ClpX chaperone family. HslU subfamily. As to quaternary structure, a double ring-shaped homohexamer of HslV is capped on each side by a ring-shaped HslU homohexamer. The assembly of the HslU/HslV complex is dependent on binding of ATP.

Its subcellular location is the cytoplasm. Its function is as follows. ATPase subunit of a proteasome-like degradation complex; this subunit has chaperone activity. The binding of ATP and its subsequent hydrolysis by HslU are essential for unfolding of protein substrates subsequently hydrolyzed by HslV. HslU recognizes the N-terminal part of its protein substrates and unfolds these before they are guided to HslV for hydrolysis. The sequence is that of ATP-dependent protease ATPase subunit HslU from Dichelobacter nodosus (strain VCS1703A).